Reading from the N-terminus, the 1110-residue chain is Coiled-coil domain-containing protein 150 (1110 aa).

4 coiled-coil regions span residues 122–250 (LENL…TSAS), 288–313 (QDLL…SDLN), 413–695 (AAHA…KEDN), and 728–1048 (SEIA…EAHR).

In Mus musculus (Mouse), this protein is Coiled-coil domain-containing protein 150 (Ccdc150).